Consider the following 793-residue polypeptide: ABC transporter G family member 1 (793 aa).

The segment covering 1–20 has biased composition (low complexity); it reads MDSNNNNNNENEAFSGASES. Residues 1–96 form a disordered region; sequence MDSNNNNNNE…NNNQNNNIIN (96 aa). A compositionally biased stretch (basic and acidic residues) spans 21-37; sequence SEFRKIVEENENEREFE. Polar residues predominate over residues 59 to 68; it reads ETINPNISLD. Residues 67 to 102 are a coiled coil; it reads LDNNNNNNQNNQNNQNNNNNNNNQNNNIINNLNKKN. Low complexity predominate over residues 69 to 96; the sequence is NNNNNNQNNQNNQNNNNNNNNQNNNIIN. One can recognise an ABC transporter domain in the interval 123-364; the sequence is VQITEKGKKK…FNANGYHCSE (242 aa). Position 156-163 (156-163) interacts with ATP; the sequence is GPSGAGKT. Residues 382 to 398 show a composition bias toward acidic residues; it reads DQADSDDDDYNDEEEEI. The interval 382–457 is disordered; it reads DQADSDDDDY…QSTDGRARRR (76 aa). Positions 399–413 are enriched in gly residues; sequence GGGGGGSGGGAGGIE. The segment covering 421–437 has biased composition (polar residues); it reads PTMNGSAVDNIKNNELK. A compositionally biased stretch (low complexity) spans 438–448; that stretch reads QQQQQQQQQQQ. In terms of domain architecture, ABC transmembrane type-2 spans 527 to 785; it reads MAFKVNLIQA…VLTFLVLKLK (259 aa). The next 7 membrane-spanning stretches (helical) occupy residues 533 to 553, 563 to 583, 610 to 630, 647 to 667, 674 to 694, 701 to 721, and 764 to 784; these read LIQAIFQGLLCGIVYYQLGLG, VVAFIIMGVSFPAVMSTIHVF, FMDACIAVLLPMVTATIVYWM, FVLMLVLASQTCLSLGVLISS, VGTAVAPLIVILFFLFSGFFI, GWLVWFPYISFFRYMIEAAVI, and VWILVLYIIGFRVLTFLVLKL.

This sequence belongs to the ABC transporter superfamily. ABCG family.

It is found in the membrane. The polypeptide is ABC transporter G family member 1 (abcG1) (Dictyostelium discoideum (Social amoeba)).